Here is a 461-residue protein sequence, read N- to C-terminus: Aspartic proteinase NANA, chloroplast (461 aa).

N86 carries an N-linked (GlcNAc...) asparagine glycan. One can recognise a Peptidase A1 domain in the interval 106 to 456 (YFTEIRVGTP…DLMASTLSFA (351 aa)). Residue D124 is part of the active site. N-linked (GlcNAc...) asparagine glycosylation occurs at N274. Residue D338 is part of the active site. N-linked (GlcNAc...) asparagine glycosylation occurs at N386.

Belongs to the peptidase A1 family.

It is found in the plastid. Its subcellular location is the chloroplast. Its activity is regulated as follows. Repressed by pepstatin A. In terms of biological role, aspartic proteinase that can use azocasein as substrate and regulates endogenous sugar levels (e.g. sucrose, glucose and fructose) by modulating starch accumulation and remobilization. Influences general morphology and development. This is Aspartic proteinase NANA, chloroplast from Arabidopsis thaliana (Mouse-ear cress).